Here is a 284-residue protein sequence, read N- to C-terminus: 2-dehydro-3-deoxyphosphooctonate aldolase (284 aa).

This sequence belongs to the KdsA family.

The protein localises to the cytoplasm. The enzyme catalyses D-arabinose 5-phosphate + phosphoenolpyruvate + H2O = 3-deoxy-alpha-D-manno-2-octulosonate-8-phosphate + phosphate. It functions in the pathway carbohydrate biosynthesis; 3-deoxy-D-manno-octulosonate biosynthesis; 3-deoxy-D-manno-octulosonate from D-ribulose 5-phosphate: step 2/3. It participates in bacterial outer membrane biogenesis; lipopolysaccharide biosynthesis. This is 2-dehydro-3-deoxyphosphooctonate aldolase from Ralstonia pickettii (strain 12J).